A 343-amino-acid chain; its full sequence is Homeobox protein DBX1 (343 aa).

Disordered stretches follow at residues 56-100 (RSVP…TAFS) and 240-343 (KERE…ITVS). Residues 181–240 (GMLRRAVFSDVQRKALEKMFQKQKYISKPDRKKLAAKLGLKDSQVKIWFQNRRMKWRNSK) constitute a DNA-binding region (homeobox). Low complexity predominate over residues 314–323 (AHSSSPGKPS). Over residues 326–343 (SDSEEEEEGEEQEEITVS) the composition is skewed to acidic residues.

Belongs to the H2.0 homeobox family.

It localises to the nucleus. Could have a role in patterning the central nervous system during embryogenesis. Has a key role in regulating the distinct phenotypic features that distinguish two major classes of ventral interneurons, V0 and V1 neurons. Regulates the transcription factor profile, neurotransmitter phenotype, intraspinal migratory path and axonal trajectory of V0 neurons, features that differentiate them from an adjacent set of V1 neurons. The sequence is that of Homeobox protein DBX1 (DBX1) from Homo sapiens (Human).